The primary structure comprises 2190 residues: Integrator complex subunit 1 (2190 aa).

A disordered region spans residues 1–61 (MNRAKPTTVR…GLPSERKRDA (61 aa)). Ser13 is subject to Phosphoserine. A compositionally biased stretch (polar residues) spans 34–44 (GQANESKTAST). Lys47 carries the post-translational modification N6-acetyllysine. Thr83 carries the post-translational modification Phosphothreonine. 3 positions are modified to phosphoserine: Ser87, Ser307, and Ser924. The disordered stretch occupies residues 922–945 (AASGEEDDEGESKEQKAKKRQRQQ). A compositionally biased stretch (acidic residues) spans 923 to 932 (ASGEEDDEGE). Residues 1159-1179 (TATMHILVVHAMVILLTLGPP) form a helical membrane-spanning segment. Residues 1311-1334 (SLPPRRDSTEAPKPKSSPEQPIGQ) are disordered. Residues 1314–1323 (PRRDSTEAPK) show a composition bias toward basic and acidic residues. 4 positions are modified to phosphoserine: Ser1318, Ser1326, Ser1327, and Ser1395.

This sequence belongs to the Integrator subunit 1 family. Component of the Integrator complex, composed of core subunits INTS1, INTS2, INTS3, INTS4, INTS5, INTS6, INTS7, INTS8, INTS9/RC74, INTS10, INTS11/CPSF3L, INTS12, INTS13, INTS14 and INTS15. The core complex associates with protein phosphatase 2A subunits PPP2CA and PPP2R1A, to form the Integrator-PP2A (INTAC) complex. Interacts with ESRRB, ESRRB is not a core component of the Integrator complex and this association is a bridge for the interaction with the multiprotein complex Integrator; attracts the transcriptional machinery.

The protein resides in the nucleus. It localises to the nucleus membrane. Its function is as follows. Component of the integrator complex, a multiprotein complex that terminates RNA polymerase II (Pol II) transcription in the promoter-proximal region of genes. The integrator complex provides a quality checkpoint during transcription elongation by driving premature transcription termination of transcripts that are unfavorably configured for transcriptional elongation: the complex terminates transcription by (1) catalyzing dephosphorylation of the C-terminal domain (CTD) of Pol II subunit POLR2A/RPB1 and SUPT5H/SPT5, (2) degrading the exiting nascent RNA transcript via endonuclease activity and (3) promoting the release of Pol II from bound DNA. The integrator complex is also involved in terminating the synthesis of non-coding Pol II transcripts, such as enhancer RNAs (eRNAs), small nuclear RNAs (snRNAs), telomerase RNAs and long non-coding RNAs (lncRNAs). Within the integrator complex, INTS1 is involved in the post-termination step: INTS1 displaces INTS3 and the SOSS factors, allowing the integrator complex to return to the closed conformation, ready to bind to the paused elongation complex for another termination cycle. Mediates recruitment of cytoplasmic dynein to the nuclear envelope, probably as component of the integrator complex. This Homo sapiens (Human) protein is Integrator complex subunit 1.